The sequence spans 402 residues: NADH-quinone oxidoreductase subunit D (402 aa).

The protein belongs to the complex I 49 kDa subunit family. As to quaternary structure, NDH-1 is composed of 14 different subunits. Subunits NuoB, C, D, E, F, and G constitute the peripheral sector of the complex.

The protein resides in the cell inner membrane. It catalyses the reaction a quinone + NADH + 5 H(+)(in) = a quinol + NAD(+) + 4 H(+)(out). NDH-1 shuttles electrons from NADH, via FMN and iron-sulfur (Fe-S) centers, to quinones in the respiratory chain. The immediate electron acceptor for the enzyme in this species is believed to be ubiquinone. Couples the redox reaction to proton translocation (for every two electrons transferred, four hydrogen ions are translocated across the cytoplasmic membrane), and thus conserves the redox energy in a proton gradient. This Cereibacter sphaeroides (strain ATCC 17025 / ATH 2.4.3) (Rhodobacter sphaeroides) protein is NADH-quinone oxidoreductase subunit D.